The sequence spans 120 residues: Large ribosomal subunit protein bL19 (120 aa).

It belongs to the bacterial ribosomal protein bL19 family.

Functionally, this protein is located at the 30S-50S ribosomal subunit interface and may play a role in the structure and function of the aminoacyl-tRNA binding site. The protein is Large ribosomal subunit protein bL19 of Synechococcus sp. (strain ATCC 27144 / PCC 6301 / SAUG 1402/1) (Anacystis nidulans).